Reading from the N-terminus, the 392-residue chain is Probable tRNA sulfurtransferase (392 aa).

The region spanning 59 to 166 (DEIIERVKKV…ECSFVFTKKV (108 aa)) is the THUMP domain. ATP contacts are provided by residues 183–184 (LL), 208–209 (HF), R265, G287, and Q296.

It belongs to the ThiI family.

The protein resides in the cytoplasm. It carries out the reaction [ThiI sulfur-carrier protein]-S-sulfanyl-L-cysteine + a uridine in tRNA + 2 reduced [2Fe-2S]-[ferredoxin] + ATP + H(+) = [ThiI sulfur-carrier protein]-L-cysteine + a 4-thiouridine in tRNA + 2 oxidized [2Fe-2S]-[ferredoxin] + AMP + diphosphate. The enzyme catalyses [ThiS sulfur-carrier protein]-C-terminal Gly-Gly-AMP + S-sulfanyl-L-cysteinyl-[cysteine desulfurase] + AH2 = [ThiS sulfur-carrier protein]-C-terminal-Gly-aminoethanethioate + L-cysteinyl-[cysteine desulfurase] + A + AMP + 2 H(+). It participates in cofactor biosynthesis; thiamine diphosphate biosynthesis. In terms of biological role, catalyzes the ATP-dependent transfer of a sulfur to tRNA to produce 4-thiouridine in position 8 of tRNAs, which functions as a near-UV photosensor. Also catalyzes the transfer of sulfur to the sulfur carrier protein ThiS, forming ThiS-thiocarboxylate. This is a step in the synthesis of thiazole, in the thiamine biosynthesis pathway. The sulfur is donated as persulfide by IscS. This chain is Probable tRNA sulfurtransferase, found in Alkaliphilus metalliredigens (strain QYMF).